We begin with the raw amino-acid sequence, 332 residues long: Packaging enzyme P4 (332 aa).

The tract at residues 111–138 is involved in the regulation and mechanisms of transcription, replication and genome packaging; the sequence is RWPSEGIYSGVTALMGATGSGKSITLNE. ATP is bound at residue 126–133; the sequence is GATGSGKS. Positions 310-332 are disordered; the sequence is LERGSVDTDDRNSAPRRGANFSL. A compositionally biased stretch (basic and acidic residues) spans 313–322; it reads GSVDTDDRNS.

As to quaternary structure, homohexamer. Part of the packaging complex composed of RDRP, P4 and P7.

The protein resides in the virion. The catalysed reaction is a ribonucleoside 5'-triphosphate + H2O = a ribonucleoside 5'-diphosphate + phosphate + H(+). Its function is as follows. Packaging motor with helicase and translocase activities. Part of the packaging complex that packages the viral RNA segments, replicate them into a double-stranded form and transcribe them. is one of the structural proteins of the polyhedral procapsid, which is responsible for genomic replication and transcription. Displays single-stranded RNA-stimulated NTPase activity. The chain is Packaging enzyme P4 (P4) from Pseudomonas savastanoi pv. phaseolicola (Pseudomonas syringae pv. phaseolicola).